Consider the following 436-residue polypeptide: MLKVSALLCVCAAAWCSQTLAAAAAVAVAGGRSDGGNFLDEKQWLTTISQYDKEVGQWNKFRDEVEDDYFRTWNPGKPFDQALDPAKDPCLKTKCSRHKVCITQDAQTALCISHRRLTHSMKEVGGSHKQWRGLPSSTCKPCPIAYASPVCGSDGHSYSSQCKLEYQACVLGKQISIKCEGRCPCPSDKSMNIGRNVKRACSDLEFREVANRLRDWFKALHESGSQNKKTKALLRPERSRFDTSILPICKDSLGWMFNRLDTNYDLLLDQSELGSIYLDKNEQCTKAFFNSCDTYKDSLISNNEWCYCFQRQQDPPCHTELSNIQKRQGIKKLLGQYIPLCDEDGYYKPTQCHGSVGQCWCVDRYGNEVVGSRINGVADCAIDFEISGDFASGDFREWTDDEGEEDDIMNDKDDIEDDDEDEGDDDDDGDVHDGYI.

A signal peptide spans 1–22 (MLKVSALLCVCAAAWCSQTLAA). 8 cysteine pairs are disulfide-bonded: C90/C101, C95/C111, C139/C169, C142/C162, C151/C183, C317/C341, C352/C359, and C361/C380. A Kazal-like domain is found at 133 to 185 (GLPSSTCKPCPIAYASPVCGSDGHSYSSQCKLEYQACVLGKQISIKCEGRCPC). The 67-residue stretch at 314–380 (DPPCHTELSN…GSRINGVADC (67 aa)) folds into the Thyroglobulin type-1 domain. 2 O-linked (Xyl...) (glycosaminoglycan) serine glycosylation sites follow: S387 and S392. The tract at residues 393 to 436 (GDFREWTDDEGEEDDIMNDKDDIEDDDEDEGDDDDDGDVHDGYI) is disordered. The segment covering 399–430 (TDDEGEEDDIMNDKDDIEDDDEDEGDDDDDGD) has biased composition (acidic residues).

Post-translationally, contains chondroitin sulfate and heparan sulfate O-linked oligosaccharides. As to expression, expressed in brain.

The protein resides in the secreted. It localises to the extracellular space. It is found in the extracellular matrix. In terms of biological role, may participate in diverse steps of neurogenesis. Inhibits the processing of pro-matrix metalloproteinase 2 (MMP-2) by MT1-MMP and MT3-MMP. May interfere with tumor invasion. This is Testican-3 (Spock3) from Mus musculus (Mouse).